Reading from the N-terminus, the 510-residue chain is Rab proteins geranylgeranyltransferase component A 1 (510 aa).

Belongs to the Rab GDI family. In terms of assembly, may interact with rab-5, rab-7 and rab-11. Does not interact with rab-3, rab-27 and rab-10. As to expression, expressed in several neurons including head neurons, motor neurons located in the ventral nerve cord, HSN and CAN neurons, and tail neurons, and in muscles such as body-wall, pharyngeal, intestinal and anal sphincter. Also expressed in seam cells, the hypodermis and the intestine.

It is found in the cytoplasm. Substrate-binding subunit of the Rab geranylgeranyltransferase (GGTase) complex. Binds unprenylated Rab proteins and presents the substrate peptide to the catalytic component B and remains bound to it after the geranylgeranyl transfer reaction. The component A is thought to be regenerated by transferring its prenylated Rab back to the donor membrane. Plays a role in neurotransmitter release from presynaptic terminals at neuromuscular junctions. Positively regulates the function of rab-27 in synaptic transmission most likely through mediating rab-27 prenylation. This Caenorhabditis elegans protein is Rab proteins geranylgeranyltransferase component A 1.